A 229-amino-acid chain; its full sequence is MAKKKAFSPIFHLSFIVFLPWGIYLSFKKCLGSWITNWWNTSESEIFLNIIQEKSILENFIELEEFLFVEEIFKNNSETHPQEFHTGIHKEAIQFIKIQNESYIHMILRLSTNLICVVIISGFYIWRNETLVILNSWSREFLYNLSDTVKVFSILLLTDLCIGFHSPHGWELMIGSIYKDFGFVQNDRIISGLVSTFPVILDTIFKYWIFRYLNRVSPSLVVIYHSMND.

Transmembrane regions (helical) follow at residues 7-27 (FSPI…YLSF), 106-126 (MILR…FYIW), and 189-209 (IISG…KYWI).

Belongs to the CemA family.

The protein resides in the plastid membrane. The catalysed reaction is K(+)(in) + H(+)(out) = K(+)(out) + H(+)(in). In terms of biological role, may be involved in proton extrusion. The sequence is that of Potassium/proton antiporter CemA from Cuscuta reflexa (Southern Asian dodder).